An 83-amino-acid chain; its full sequence is Small ribosomal subunit protein bS16 (83 aa).

This sequence belongs to the bacterial ribosomal protein bS16 family.

The protein is Small ribosomal subunit protein bS16 of Polaromonas sp. (strain JS666 / ATCC BAA-500).